Here is a 240-residue protein sequence, read N- to C-terminus: Ribonuclease PH (240 aa).

Residues R87 and 125–127 (GTR) each bind phosphate.

It belongs to the RNase PH family. In terms of assembly, homohexameric ring arranged as a trimer of dimers.

The catalysed reaction is tRNA(n+1) + phosphate = tRNA(n) + a ribonucleoside 5'-diphosphate. Phosphorolytic 3'-5' exoribonuclease that plays an important role in tRNA 3'-end maturation. Removes nucleotide residues following the 3'-CCA terminus of tRNAs; can also add nucleotides to the ends of RNA molecules by using nucleoside diphosphates as substrates, but this may not be physiologically important. Probably plays a role in initiation of 16S rRNA degradation (leading to ribosome degradation) during starvation. This Pseudomonas putida (strain GB-1) protein is Ribonuclease PH.